We begin with the raw amino-acid sequence, 151 residues long: MKIWIDADACPRAVKEILFRASTRLRVPLCLVANRSLAKHAGPLVESVVVADGFDVADDYIAEHAAPTDLVVTADVPLAARIVAKGGVALDPRGELYSEESIGERLAMRDLLSELRDTGMIQGGGPAPFSMSDRNRFASALDSLLHRMLRR.

The protein belongs to the UPF0178 family.

The chain is UPF0178 protein GSU0171 from Geobacter sulfurreducens (strain ATCC 51573 / DSM 12127 / PCA).